We begin with the raw amino-acid sequence, 202 residues long: MASQGRRRRPLRRPETVVPGEATETDSERSASSSEEEELYLGPSGPTRGRPTGLRVAGEAAETDSEPEPEPEPTAAPRDLPPLVVQRESAEEAWGTEEAPAPAPARSLLQLRLAESQARLDHDVAAAVSGVYRRAGRDVAALASRLAAAQAAGLAAAHSVRLARGDLCALAERLDIVAGCRLLPDIRGVPGTEPEKDPGPRA.

Residues 1–11 (MASQGRRRRPL) show a composition bias toward basic residues. The interval 1–82 (MASQGRRRRP…PTAAPRDLPP (82 aa)) is disordered. Residues 41 to 55 (LGPSGPTRGRPTGLR) are compositionally biased toward low complexity. Over residues 61–71 (AETDSEPEPEP) the composition is skewed to acidic residues. Thr63 carries the post-translational modification Phosphothreonine. Ser65 is subject to Phosphoserine.

The protein belongs to the BLOC1S3 family. As to quaternary structure, interacts with BLOC1S4, BLOC1S5 and BLOC1S6. Component of the biogenesis of lysosome-related organelles complex 1 (BLOC-1) composed of BLOC1S1, BLOC1S2, BLOC1S3, BLOC1S4, BLOC1S5, BLOC1S6, DTNBP1/BLOC1S7 and SNAPIN/BLOC1S8. Octamer composed of one copy each BLOC1S1, BLOC1S2, BLOC1S3, BLOC1S4, BLOC1S5, BLOC1S6, DTNBP1/BLOC1S7 and SNAPIN/BLOC1S8. The BLOC-1 complex associates with the AP-3 protein complex and membrane protein cargos. Interacts directly with BLOC1S2.

The protein localises to the cytoplasm. In terms of biological role, component of the BLOC-1 complex, a complex that is required for normal biogenesis of lysosome-related organelles (LRO), such as platelet dense granules and melanosomes. In concert with the AP-3 complex, the BLOC-1 complex is required to target membrane protein cargos into vesicles assembled at cell bodies for delivery into neurites and nerve terminals. The BLOC-1 complex, in association with SNARE proteins, is also proposed to be involved in neurite extension. Plays a role in intracellular vesicle trafficking. The sequence is that of Biogenesis of lysosome-related organelles complex 1 subunit 3 (BLOC1S3) from Homo sapiens (Human).